A 233-amino-acid chain; its full sequence is Favin (233 aa).

Positions 120 and 122 each coordinate Mn(2+). Positions 122, 124, 126, and 130 each coordinate Ca(2+). Residues D130 and H137 each coordinate Mn(2+). A glycan (N-linked (GlcNAc...) asparagine) is linked at N168.

This sequence belongs to the leguminous lectin family. As to quaternary structure, heterodimer of an alpha and a beta chain.

This Vicia faba (Broad bean) protein is Favin.